We begin with the raw amino-acid sequence, 143 residues long: Transcriptional regulator MraZ (143 aa).

2 consecutive SpoVT-AbrB domains span residues 5 to 47 and 76 to 119; these read EYQH…PKEE and AGEC…SRER.

Belongs to the MraZ family. Forms oligomers.

Its subcellular location is the cytoplasm. The protein resides in the nucleoid. The sequence is that of Transcriptional regulator MraZ from Heliobacterium modesticaldum (strain ATCC 51547 / Ice1).